The following is a 425-amino-acid chain: Serine--tRNA ligase (425 aa).

Residue 231 to 233 (TAE) coordinates L-serine. 262–264 (RSE) contacts ATP. Position 285 (E285) interacts with L-serine. An ATP-binding site is contributed by 349 to 352 (EISS). S385 provides a ligand contact to L-serine.

Belongs to the class-II aminoacyl-tRNA synthetase family. Type-1 seryl-tRNA synthetase subfamily. As to quaternary structure, homodimer. The tRNA molecule binds across the dimer.

The protein localises to the cytoplasm. It catalyses the reaction tRNA(Ser) + L-serine + ATP = L-seryl-tRNA(Ser) + AMP + diphosphate + H(+). The catalysed reaction is tRNA(Sec) + L-serine + ATP = L-seryl-tRNA(Sec) + AMP + diphosphate + H(+). Its pathway is aminoacyl-tRNA biosynthesis; selenocysteinyl-tRNA(Sec) biosynthesis; L-seryl-tRNA(Sec) from L-serine and tRNA(Sec): step 1/1. Catalyzes the attachment of serine to tRNA(Ser). Is also able to aminoacylate tRNA(Sec) with serine, to form the misacylated tRNA L-seryl-tRNA(Sec), which will be further converted into selenocysteinyl-tRNA(Sec). This chain is Serine--tRNA ligase, found in Bacillus velezensis (strain DSM 23117 / BGSC 10A6 / LMG 26770 / FZB42) (Bacillus amyloliquefaciens subsp. plantarum).